The primary structure comprises 71 residues: MSKDDLIQFTGTVLELLPNANFRVKLENDHLIIAHTSGRMRKNRIRILLGDKVTVEMTPYDLTKGRVIHRH.

In terms of domain architecture, S1-like spans 1–71 (MSKDDLIQFT…LTKGRVIHRH (71 aa)).

It belongs to the IF-1 family. Component of the 30S ribosomal translation pre-initiation complex which assembles on the 30S ribosome in the order IF-2 and IF-3, IF-1 and N-formylmethionyl-tRNA(fMet); mRNA recruitment can occur at any time during PIC assembly.

It localises to the cytoplasm. Its function is as follows. One of the essential components for the initiation of protein synthesis. Stabilizes the binding of IF-2 and IF-3 on the 30S subunit to which N-formylmethionyl-tRNA(fMet) subsequently binds. Helps modulate mRNA selection, yielding the 30S pre-initiation complex (PIC). Upon addition of the 50S ribosomal subunit IF-1, IF-2 and IF-3 are released leaving the mature 70S translation initiation complex. In Rickettsia canadensis (strain McKiel), this protein is Translation initiation factor IF-1.